Here is a 318-residue protein sequence, read N- to C-terminus: MIKKRNTTKISVIGAGSVGATTAYALMLSGVATEIVLVDVNKSKTEGEAMDLSHGADFVKPVNILSGDYKDTEGSDIVVITAGAAQKVGETRLQLINKNINIFKSIIPEVVKYNKDAILLVVSNPVDVLSYVTYKLSGFPKERVIGSGTVLDTSRLKHEIGKRYKIDPRNVNTYIMGEHGDSEIATWSVTNIQNIKIDEYANKENLEYNDNFRKEVYENVKNAAYEVINRKGATFYAIALAVTRIVKAILGDEKTILPVSTLVENYYGIKDVYLGMPCIVGGSGIEKALSIDLNKTEASKLVKSAETLKNTLNNASCL.

Residues valine 18, aspartate 39, lysine 44, tyrosine 69, and 83 to 84 (GA) each bind NAD(+). Substrate contacts are provided by glutamine 86 and arginine 92. NAD(+) contacts are provided by residues serine 105, 122–124 (VSN), and serine 147. 124-127 (NPVD) lines the substrate pocket. 152 to 155 (DTSR) contributes to the substrate binding site. Histidine 179 serves as the catalytic Proton acceptor. At tyrosine 225 the chain carries Phosphotyrosine. Threonine 234 serves as a coordination point for substrate.

It belongs to the LDH/MDH superfamily. LDH family. As to quaternary structure, homotetramer.

It localises to the cytoplasm. The enzyme catalyses (S)-lactate + NAD(+) = pyruvate + NADH + H(+). The protein operates within fermentation; pyruvate fermentation to lactate; (S)-lactate from pyruvate: step 1/1. In terms of biological role, catalyzes the conversion of lactate to pyruvate. The protein is L-lactate dehydrogenase of Clostridium botulinum (strain Kyoto / Type A2).